The primary structure comprises 370 residues: Aldo-keto reductase NECHADRAFT_45914 (370 aa).

Asp78 contributes to the NADP(+) binding site. Catalysis depends on Tyr83, which acts as the Proton donor. A substrate-binding site is contributed by His174. NADP(+) is bound by residues 204 to 205, Gln230, 259 to 269, and 333 to 341; these read SS, APLASGRLARR, and STVQRIEEA.

Belongs to the aldo/keto reductase family.

It participates in secondary metabolite biosynthesis. In terms of biological role, aldo-keto reductase; part of the gene cluster that mediates the biosynthesis of sansalvamide, a cyclic pentadepsipeptide that shows promising results as potential anti-cancer drug. The nonribosmal peptide synthetase NRPS30 produces sansalvamide by incorporating successively one phenylalanine, one leucine, one alpha-hydroxyisocaproic acid (HICA), one valine and one leucine before sansalvamide is released from by cyclization by the terminal C domain of NRPS30. The HICA residue is probably provided by reduction of alpha-ketoisocaproate by the cluster-specific aldo-keto reductase (NECHADRAFT_45914). The chain is Aldo-keto reductase NECHADRAFT_45914 from Fusarium vanettenii (strain ATCC MYA-4622 / CBS 123669 / FGSC 9596 / NRRL 45880 / 77-13-4) (Fusarium solani subsp. pisi).